An 817-amino-acid chain; its full sequence is Phosphoenolpyruvate synthase (817 aa).

Histidine 442 functions as the Tele-phosphohistidine intermediate in the catalytic mechanism. The substrate site is built by arginine 540, arginine 587, glutamate 684, glycine 706, threonine 707, asparagine 708, and aspartate 709. Glutamate 684 is a binding site for Mg(2+). Aspartate 709 is a Mg(2+) binding site. Cysteine 756 acts as the Proton donor in catalysis.

It belongs to the PEP-utilizing enzyme family. Homooctamer. Mg(2+) serves as cofactor.

The catalysed reaction is pyruvate + ATP + H2O = phosphoenolpyruvate + AMP + phosphate + 2 H(+). It participates in carbohydrate biosynthesis; gluconeogenesis. Functionally, catalyzes the phosphorylation of pyruvate to phosphoenolpyruvate. The protein is Phosphoenolpyruvate synthase (ppsA) of Pyrococcus furiosus (strain ATCC 43587 / DSM 3638 / JCM 8422 / Vc1).